The following is a 388-amino-acid chain: Chorismate synthase (388 aa).

NADP(+) contacts are provided by Arg-39 and Arg-45. Residues 130–132 (RSS), 251–252 (NA), Ala-296, 311–315 (KPIPT), and Arg-337 each bind FMN.

The protein belongs to the chorismate synthase family. In terms of assembly, homotetramer. FMNH2 is required as a cofactor.

It carries out the reaction 5-O-(1-carboxyvinyl)-3-phosphoshikimate = chorismate + phosphate. Its pathway is metabolic intermediate biosynthesis; chorismate biosynthesis; chorismate from D-erythrose 4-phosphate and phosphoenolpyruvate: step 7/7. Functionally, catalyzes the anti-1,4-elimination of the C-3 phosphate and the C-6 proR hydrogen from 5-enolpyruvylshikimate-3-phosphate (EPSP) to yield chorismate, which is the branch point compound that serves as the starting substrate for the three terminal pathways of aromatic amino acid biosynthesis. This reaction introduces a second double bond into the aromatic ring system. The sequence is that of Chorismate synthase from Streptococcus equi subsp. zooepidemicus (strain H70).